The chain runs to 157 residues: SsrA-binding protein (157 aa).

Residues 131–157 (KQLHDKRESVKQRDWQRDKARLMRDKG) are disordered. A compositionally biased stretch (basic and acidic residues) spans 132-157 (QLHDKRESVKQRDWQRDKARLMRDKG).

The protein belongs to the SmpB family.

It localises to the cytoplasm. Functionally, required for rescue of stalled ribosomes mediated by trans-translation. Binds to transfer-messenger RNA (tmRNA), required for stable association of tmRNA with ribosomes. tmRNA and SmpB together mimic tRNA shape, replacing the anticodon stem-loop with SmpB. tmRNA is encoded by the ssrA gene; the 2 termini fold to resemble tRNA(Ala) and it encodes a 'tag peptide', a short internal open reading frame. During trans-translation Ala-aminoacylated tmRNA acts like a tRNA, entering the A-site of stalled ribosomes, displacing the stalled mRNA. The ribosome then switches to translate the ORF on the tmRNA; the nascent peptide is terminated with the 'tag peptide' encoded by the tmRNA and targeted for degradation. The ribosome is freed to recommence translation, which seems to be the essential function of trans-translation. The sequence is that of SsrA-binding protein from Methylorubrum populi (strain ATCC BAA-705 / NCIMB 13946 / BJ001) (Methylobacterium populi).